The primary structure comprises 224 residues: Small ribosomal subunit protein uS3 (224 aa).

Residues 20–89 (LDEFLANYFK…NVNITVSPVP (70 aa)) enclose the KH type-2 domain.

This sequence belongs to the universal ribosomal protein uS3 family. Part of the 30S ribosomal subunit.

Functionally, binds the lower part of the 30S subunit head. This Staphylothermus marinus (strain ATCC 43588 / DSM 3639 / JCM 9404 / F1) protein is Small ribosomal subunit protein uS3.